The sequence spans 600 residues: Proline--tRNA ligase (600 aa).

This sequence belongs to the class-II aminoacyl-tRNA synthetase family. ProS type 1 subfamily. Homodimer.

It localises to the cytoplasm. The enzyme catalyses tRNA(Pro) + L-proline + ATP = L-prolyl-tRNA(Pro) + AMP + diphosphate. Functionally, catalyzes the attachment of proline to tRNA(Pro) in a two-step reaction: proline is first activated by ATP to form Pro-AMP and then transferred to the acceptor end of tRNA(Pro). As ProRS can inadvertently accommodate and process non-cognate amino acids such as alanine and cysteine, to avoid such errors it has two additional distinct editing activities against alanine. One activity is designated as 'pretransfer' editing and involves the tRNA(Pro)-independent hydrolysis of activated Ala-AMP. The other activity is designated 'posttransfer' editing and involves deacylation of mischarged Ala-tRNA(Pro). The misacylated Cys-tRNA(Pro) is not edited by ProRS. The sequence is that of Proline--tRNA ligase from Prochlorococcus marinus (strain MIT 9211).